We begin with the raw amino-acid sequence, 434 residues long: Alpha-enolase (434 aa).

Ser2 is subject to N-acetylserine. Lys5 carries the post-translational modification N6-acetyllysine. Residue Ser27 is modified to Phosphoserine. The tract at residues 31-38 is epitope recognized by CAR and healthy patient antibodies; sequence FRAAVPSG. Position 40 (Ser40) interacts with Mg(2+). At Tyr44 the chain carries Phosphotyrosine. The segment at 56–63 is epitope recognized by CAR antibodies; it reads RYMGKGVS. Position 60 is an N6-acetyllysine; alternate (Lys60). Lys60 carries the post-translational modification N6-succinyllysine; alternate. 2 positions are modified to N6-acetyllysine: Lys64 and Lys71. Residue Lys89 is modified to N6-acetyllysine; alternate. Lys89 is modified (N6-succinyllysine; alternate). An N6-acetyllysine mark is found at Lys92 and Lys126. Residues 97–237 are required for repression of c-myc promoter activity; the sequence is MDGTENKSKF…KTAIGKAGYT (141 aa). Residues His158 and Glu167 each contribute to the substrate site. An N6-acetyllysine mark is found at Lys193 and Lys199. Lys202 carries the N6-acetyllysine; alternate modification. Residue Lys202 forms a Glycyl lysine isopeptide (Lys-Gly) (interchain with G-Cter in SUMO2); alternate linkage. Glu210 serves as the catalytic Proton donor. 2 positions are modified to N6-acetyllysine; alternate: Lys228 and Lys233. Lys228 is modified (N6-succinyllysine; alternate). At Lys228 the chain carries N6-(2-hydroxyisobutyryl)lysine; alternate. N6-malonyllysine; alternate is present on Lys233. A Mg(2+)-binding site is contributed by Asp245. Ser254 carries the post-translational modification Phosphoserine. Lys256 carries the post-translational modification N6-acetyllysine. 2 positions are modified to phosphoserine: Ser263 and Ser272. An N6-acetyllysine; alternate modification is found at Lys281. N6-(2-hydroxyisobutyryl)lysine; alternate is present on Lys281. An N6-acetyllysine modification is found at Lys285. Tyr287 carries the post-translational modification Phosphotyrosine. Residue Ser291 is modified to Phosphoserine. Mg(2+) is bound by residues Glu293 and Asp318. 2 residues coordinate substrate: Glu293 and Asp318. Lys335 and Lys343 each carry N6-acetyllysine. The active-site Proton acceptor is the Lys343. Substrate contacts are provided by residues 370–373 and Lys394; that span reads SHRS. A required for interaction with PLG region spans residues 405–434; sequence AKYNQLLRIEEELGSKAKFAGRNFRNPLAK. Lys406 carries the N6-acetyllysine modification. Lys420 carries the post-translational modification N6-acetyllysine; alternate. Lys420 is subject to N6-succinyllysine; alternate. An N6-malonyllysine; alternate modification is found at Lys420.

Belongs to the enolase family. As to quaternary structure, mammalian enolase is composed of 3 isozyme subunits, alpha, beta and gamma, which can form homodimers or heterodimers which are cell-type and development-specific. ENO1 interacts with PLG in the neuronal plasma membrane and promotes its activation. The C-terminal lysine is required for this binding. Isoform MBP-1 interacts with TRAPPC2B. Interacts with ENO4 and PGAM2. Interacts with CMTM6. Requires Mg(2+) as cofactor. In terms of processing, ISGylated. Post-translationally, lysine 2-hydroxyisobutyrylation (Khib) by p300/EP300 activates the phosphopyruvate hydratase activity. The alpha/alpha homodimer is expressed in embryo and in most adult tissues. The alpha/beta heterodimer and the beta/beta homodimer are found in striated muscle, and the alpha/gamma heterodimer and the gamma/gamma homodimer in neurons.

The protein resides in the cytoplasm. It localises to the cell membrane. Its subcellular location is the myofibril. The protein localises to the sarcomere. It is found in the m line. The protein resides in the nucleus. The catalysed reaction is (2R)-2-phosphoglycerate = phosphoenolpyruvate + H2O. It participates in carbohydrate degradation; glycolysis; pyruvate from D-glyceraldehyde 3-phosphate: step 4/5. Functionally, glycolytic enzyme the catalyzes the conversion of 2-phosphoglycerate to phosphoenolpyruvate. In addition to glycolysis, involved in various processes such as growth control, hypoxia tolerance and allergic responses. May also function in the intravascular and pericellular fibrinolytic system due to its ability to serve as a receptor and activator of plasminogen on the cell surface of several cell-types such as leukocytes and neurons. Stimulates immunoglobulin production. Its function is as follows. Binds to the myc promoter and acts as a transcriptional repressor. May be a tumor suppressor. This is Alpha-enolase (ENO1) from Homo sapiens (Human).